The following is a 56-amino-acid chain: uncharacterized protein (56 aa).

The chain crosses the membrane as a helical span at residues 33–53; sequence INIIYLAIMKIIMNIIMMIMI.

The protein localises to the host membrane. This is an uncharacterized protein from Bos taurus (Bovine).